The sequence spans 632 residues: Threonine--tRNA ligase (632 aa).

The region spanning 1-59 is the TGS domain; sequence MIRITFLAKQKVEEYSSRVTGFDILQPDISKEAIALRVNGELYDLSREIESDTEIDVIQ. Positions 240-532 are catalytic; that stretch reads DHRRIAKDMD…LIEHYAGKFP (293 aa). Cysteine 332, histidine 383, and histidine 509 together coordinate Zn(2+).

The protein belongs to the class-II aminoacyl-tRNA synthetase family. As to quaternary structure, homodimer. The cofactor is Zn(2+).

The protein localises to the cytoplasm. The enzyme catalyses tRNA(Thr) + L-threonine + ATP = L-threonyl-tRNA(Thr) + AMP + diphosphate + H(+). Functionally, catalyzes the attachment of threonine to tRNA(Thr) in a two-step reaction: L-threonine is first activated by ATP to form Thr-AMP and then transferred to the acceptor end of tRNA(Thr). Also edits incorrectly charged L-seryl-tRNA(Thr). This Wolbachia sp. subsp. Brugia malayi (strain TRS) protein is Threonine--tRNA ligase.